The following is a 445-amino-acid chain: Tubulin beta-3 chain (445 aa).

The short motif at Met-1–Ile-4 is the MREI motif element. GTP is bound by residues Gln-11, Glu-69, Ser-138, Gly-142, Thr-143, Gly-144, Asn-204, and Asn-226. Glu-69 contacts Mg(2+). The tract at residues Tyr-425–Glu-445 is disordered. Residues Thr-429–Glu-445 show a composition bias toward acidic residues. A 5-glutamyl polyglutamate modification is found at Glu-438.

It belongs to the tubulin family. Dimer of alpha and beta chains. A typical microtubule is a hollow water-filled tube with an outer diameter of 25 nm and an inner diameter of 15 nM. Alpha-beta heterodimers associate head-to-tail to form protofilaments running lengthwise along the microtubule wall with the beta-tubulin subunit facing the microtubule plus end conferring a structural polarity. Microtubules usually have 13 protofilaments but different protofilament numbers can be found in some organisms and specialized cells. Mg(2+) is required as a cofactor. In terms of processing, some glutamate residues at the C-terminus are polyglycylated, resulting in polyglycine chains on the gamma-carboxyl group. Glycylation is mainly limited to tubulin incorporated into axonemes (cilia and flagella) whereas glutamylation is prevalent in neuronal cells, centrioles, axonemes, and the mitotic spindle. Both modifications can coexist on the same protein on adjacent residues, and lowering polyglycylation levels increases polyglutamylation, and reciprocally. The precise function of polyglycylation is still unclear. Some glutamate residues at the C-terminus are polyglutamylated, resulting in polyglutamate chains on the gamma-carboxyl group. Polyglutamylation plays a key role in microtubule severing by spastin (SPAST). SPAST preferentially recognizes and acts on microtubules decorated with short polyglutamate tails: severing activity by SPAST increases as the number of glutamates per tubulin rises from one to eight, but decreases beyond this glutamylation threshold. In terms of tissue distribution, highly expressed in testis.

Its subcellular location is the cytoplasm. The protein resides in the cytoskeleton. In terms of biological role, tubulin is the major constituent of microtubules, a cylinder consisting of laterally associated linear protofilaments composed of alpha- and beta-tubulin heterodimers. Microtubules grow by the addition of GTP-tubulin dimers to the microtubule end, where a stabilizing cap forms. Below the cap, tubulin dimers are in GDP-bound state, owing to GTPase activity of alpha-tubulin. TUBB3 plays a role in dorsal root ganglion axon projection towards the spinal cord. The polypeptide is Tubulin beta-3 chain (Gallus gallus (Chicken)).